A 457-amino-acid chain; its full sequence is Phosphoglucosamine mutase (457 aa).

Ser-103 functions as the Phosphoserine intermediate in the catalytic mechanism. Residues Ser-103, Asp-244, Asp-246, and Asp-248 each coordinate Mg(2+). At Ser-103 the chain carries Phosphoserine.

Belongs to the phosphohexose mutase family. It depends on Mg(2+) as a cofactor. Activated by phosphorylation.

It catalyses the reaction alpha-D-glucosamine 1-phosphate = D-glucosamine 6-phosphate. Catalyzes the conversion of glucosamine-6-phosphate to glucosamine-1-phosphate. This is Phosphoglucosamine mutase from Granulibacter bethesdensis (strain ATCC BAA-1260 / CGDNIH1).